A 526-amino-acid chain; its full sequence is WRKY transcription factor 72A (526 aa).

Basic and acidic residues-rich tracts occupy residues 40–52 (KERK…DDNS) and 60–76 (LTGD…KADM). Disordered regions lie at residues 40 to 76 (KERK…KADM) and 170 to 200 (SSTK…QTWP). Residues 62–106 (GDKKDDQLESAKADMEEVMEENQRLKKHLDKIMKDYRNLQMQFHE) adopt a coiled-coil conformation. The segment covering 170-185 (SSTKSSPSNLSPENSL) has biased composition (low complexity). Residues 232–298 (CDTPTMNDGC…YEGTHNHPLP (67 aa)) constitute a DNA-binding region (WRKY).

Belongs to the WRKY group II-b family. Expressed in roots, trichomes and fruits.

The protein resides in the nucleus. Its function is as follows. Transcription activator involved in the transcriptional regulation of terpene biosynthesis in glandular trichomes. Binds to the promoter of the linalool synthase TPS5 and promotes TPS5 gene transactivation. In association with WRKY72B, contributes to basal defense against root-knot nematodes (RKNs) and potato aphids, as well as Mi-1-mediated gene-for-gene resistance to these pests. Both WRKY72A and WRKY72B are not required for gene-for-gene resistance mediated by Pto, another tomato R gene. This Solanum lycopersicum (Tomato) protein is WRKY transcription factor 72A.